We begin with the raw amino-acid sequence, 939 residues long: Valine--tRNA ligase (939 aa).

A 'HIGH' region motif is present at residues 47–57 (PNVTGILHMGH). The short motif at 563-567 (KLSKS) is the 'KMSKS' region element. An ATP-binding site is contributed by Lys566. A coiled-coil region spans residues 874–939 (EHLAKERVRL…QSILDKLASL (66 aa)).

The protein belongs to the class-I aminoacyl-tRNA synthetase family. ValS type 1 subfamily. In terms of assembly, monomer.

Its subcellular location is the cytoplasm. The enzyme catalyses tRNA(Val) + L-valine + ATP = L-valyl-tRNA(Val) + AMP + diphosphate. In terms of biological role, catalyzes the attachment of valine to tRNA(Val). As ValRS can inadvertently accommodate and process structurally similar amino acids such as threonine, to avoid such errors, it has a 'posttransfer' editing activity that hydrolyzes mischarged Thr-tRNA(Val) in a tRNA-dependent manner. This chain is Valine--tRNA ligase, found in Chlamydia trachomatis serovar L2 (strain ATCC VR-902B / DSM 19102 / 434/Bu).